Reading from the N-terminus, the 292-residue chain is Xyloglucan endotransglucosylase/hydrolase protein 2 (292 aa).

The N-terminal stretch at 1–24 is a signal peptide; that stretch reads MNRIRYCFELVSVLFLMFTANARA. The GH16 domain maps to 25 to 219; that stretch reads RGRGAIDFDV…WAYAPFKAQY (195 aa). The Nucleophile role is filled by Glu-106. Catalysis depends on Glu-110, which acts as the Proton donor. Residues Glu-110, 123-125, 133-135, 198-199, and Gly-203 contribute to the xyloglucan site; these read QTN, GRE, and NW. Disulfide bonds link Cys-227–Cys-239 and Cys-275–Cys-288. Arg-280 contacts xyloglucan.

It belongs to the glycosyl hydrolase 16 family. XTH group 1 subfamily. Post-translationally, contains at least one intrachain disulfide bond essential for its enzymatic activity.

Its subcellular location is the secreted. The protein localises to the cell wall. It is found in the extracellular space. It localises to the apoplast. The catalysed reaction is breaks a beta-(1-&gt;4) bond in the backbone of a xyloglucan and transfers the xyloglucanyl segment on to O-4 of the non-reducing terminal glucose residue of an acceptor, which can be a xyloglucan or an oligosaccharide of xyloglucan.. In terms of biological role, may catalyze xyloglucan endohydrolysis (XEH) and/or endotransglycosylation (XET). Cleaves and religates xyloglucan polymers, an essential constituent of the primary cell wall, and thereby participates in cell wall construction of growing tissues. In Arabidopsis thaliana (Mouse-ear cress), this protein is Xyloglucan endotransglucosylase/hydrolase protein 2 (XTH2).